The following is a 1329-amino-acid chain: MALRPGAGASGAAGAGTGPGGAGSFMFPVAGGMRPPQGLIPMQQQGFPMVSVMQPNMQGMMGMNYSSQMSQGPIAMQAGIPMGPMPAAGVPFLGQPPFLGMRPAAPQYTPDMQKQFAEEQQKRFEQQQKLLEEERKRRQFEEQKQKLRLLSSVKPKTGEKNRDDALEAIKGNLDGFSRDAKMHPTPASHPKKPDCPTSSHSTKTVSPSSAFLGEDEFSGFMQGPVELPTCGPSSTAQPFQSFLPSTPLGQLHTQKAGAQPLPPGQAPVSFAVHGVHGQIPCLSAASASHSMQKAGPSLEEKLLVSCDISASGQEHIKLSSPEAGHRAVVPGSSKNSPGLMAHNGGAVDGCVSGPTTAVAEKTSDQNLSKEESGVGVFPSQDPVQPRMPPWIYNESLVPDAYKKILETTMTPTGIDTAKLYPILMSSGLPRETLGQIWALANRTTPGKLTKEELYTVLAMVAVTQRGVPAMSPDTLNQFPAAPIPTLSGFPMTLPTPVSQPTAMTSGPAGSIPLSLGQPIMGINLVGPVGGAAAPTSSGFMPAYPSNQVGKTEEDDFQDFQDASKSGSIDDSFTDFQEVPASSKTSNSQHGNSAPSLLIPLPGTKASTDKYAVFKGISAEKPSENPASFGESGDKYSAFRELEPTADSKPLGESFAEFRSTGTDDGFTDFKTADSVSPLEPPTKDSFPSAFASGAAQQTQTQVKTPLNLADLDMFSSVDCSGEKPVPFSAAFSTSKSVSSRPQPAGSAAAPASLASTKASSLADDFGEFNLFGEYSNPASVGEQDDFADFMAFGNSSIPSEPKADDKYEALREEGSPGALSTSTVEGAHNPPVSSSKYDVFKQLSLEGAGLAIEEFKENTPSTKSDGDFADFHSSKFSSTSSDKSLGEKAVAFRHAKEDSASVKSLDLPSIGGSSVGKEDSEDALSVQFDMKLADVGGDLKHVMSDSSLDLPTVSGQHPPAAGSALASEDALPETPFPAFASFKDMMPQTTEQKEYESGDFQDFTRQDMPMVDRSQENTCPSPASSVASHETPKEGADDFGEFQSEKPKISKFDFLVANSQSKMKSSEEMIKSELATFDLSVQGSHKRSLSLGDKEISRSSPSPALEQPFRDRSNTLSERAALPVIRDKYKDLTGEVEENERYAYEWQRCLGSALDVIKKANDTLNGISSSAVCTEVIQSAQGMEYLLGVVEVYRVTKRVELGIKATAVCSEKLQQLLKDIDKVWNNLIGFMSLTTLTPDENSLDFSSCMLRPGIKNAQELACGVCLLNVDSRSRKEETPAEEQPKKAFNSETDSFKLAYGGHQYHASCANFWINCVEPKPPGLLLPDLL.

The stretch at 112–152 (MQKQFAEEQQKRFEQQQKLLEEERKRRQFEEQKQKLRLLSS) forms a coiled coil. The interval 175–211 (GFSRDAKMHPTPASHPKKPDCPTSSHSTKTVSPSSAF) is disordered. Over residues 197 to 209 (TSSHSTKTVSPSS) the composition is skewed to low complexity. Residues 393-504 (NESLVPDAYK…TPVSQPTAMT (112 aa)) enclose the EH domain. Positions 555-559 (DFQDF) match the DFXDF motif 1 motif. The residue at position 571 (Ser-571) is a Phosphoserine. Positions 578–594 (VPASSKTSNSQHGNSAP) are enriched in polar residues. A disordered region spans residues 578 to 600 (VPASSKTSNSQHGNSAPSLLIPL). At Lys-609 the chain carries N6-acetyllysine. Positions 614 to 878 (KGISAEKPSE…ADFHSSKFSS (265 aa)) are interaction with AP1G1. 2 disordered regions span residues 661-701 (GTDD…TQTQ) and 730-753 (AFST…PASL). Ser-676 carries the phosphoserine modification. An interaction with AP1G1, AP1G2 and GGA1 region spans residues 761–773 (LADDFGEFNLFGE). Residues 785–789 (DFADF) carry the DFXDF motif 2 motif. Residues 797 to 835 (IPSEPKADDKYEALREEGSPGALSTSTVEGAHNPPVSSS) form a disordered region. Basic and acidic residues predominate over residues 801-814 (PKADDKYEALREEG). The residue at position 815 (Ser-815) is a Phosphoserine. An N6-acetyllysine modification is found at Lys-836. Residues Ser-844 and Ser-864 each carry the phosphoserine modification. Disordered stretches follow at residues 856–922 (KENT…DSED), 941–1042 (HVMS…FGEF), and 1088–1113 (SLSL…RDRS). Over residues 864-873 (SDGDFADFHS) the composition is skewed to basic and acidic residues. The short motif at 867–871 (DFADF) is the DFXDF motif 3 element. Over residues 874–883 (SKFSSTSSDK) the composition is skewed to low complexity. Phosphoserine is present on residues Ser-904, Ser-944, Ser-947, Ser-997, Ser-1021, Ser-1088, Ser-1090, Ser-1102, and Ser-1113. A compositionally biased stretch (polar residues) spans 944 to 955 (SDSSLDLPTVSG). A compositionally biased stretch (polar residues) spans 1016 to 1028 (ENTCPSPASSVAS). Phosphothreonine is present on Thr-1115.

As to quaternary structure, self-associates. Interacts with GGA1 (via GAE domain). Interacts with GGA2 and GGA3. Interacts with AP1G1 (via GAE domain), a subunit of adapter protein complex AP-1. Interacts with AP1G2 (via GAE domain) a subunit of adapter protein complex AP-1. Component of the aftiphilin/p200/gamma-synergin complex, at least composed of AFTPH/aftiphilin, HEATR5B/p200a and SYNRG/gamma-synergin, which plays a role in the AP1G1/AP-1-mediated trafficking of transferrin from early to recycling endosomes. Within the complex interacts with AFTPH/aftiphilin and HEATR5B/p200a; the interactions are direct. Interacts (via EH domain) with SCAMP1. Detected in brain and liver (at protein level). Ubiquitously expressed.

The protein resides in the cytoplasm. It is found in the golgi apparatus. Its subcellular location is the trans-Golgi network membrane. It localises to the perinuclear region. The protein localises to the cytoplasmic vesicle. The protein resides in the clathrin-coated vesicle. Plays a role in endocytosis and/or membrane trafficking at the trans-Golgi network (TGN). May act by linking the adapter protein complex AP-1 to other proteins. Component of clathrin-coated vesicles. Component of the aftiphilin/p200/gamma-synergin complex, which plays roles in AP1G1/AP-1-mediated protein trafficking including the trafficking of transferrin from early to recycling endosomes, and the membrane trafficking of furin and the lysosomal enzyme cathepsin D between the trans-Golgi network (TGN) and endosomes. The polypeptide is Synergin gamma (Synrg) (Rattus norvegicus (Rat)).